A 1058-amino-acid chain; its full sequence is Probable plasma membrane ATPase (1058 aa).

Over residues 1–29 (MDNNQIPKNSPESSAINSAESSPKSNVSS) the composition is skewed to polar residues. Residues 1 to 123 (MDNNQIPKNS…SSSGKKEEDY (123 aa)) are disordered. At 1–212 (MDNNQIPKNS…DVKRYPILEF (212 aa)) the chain is on the cytoplasmic side. Over residues 31 to 40 (VLHENHHKEQ) the composition is skewed to basic and acidic residues. Residues 41–66 (QQLQQQLQQEQQQQQLPTTPQSEPTQ) are compositionally biased toward low complexity. The segment covering 96 to 111 (SLKTISGYPSSKNTEA) has biased composition (polar residues). The helical transmembrane segment at 213–232 (LYFMWNPLSWTMEVAAIVSI) threads the bilayer. Residues 233–237 (ALLDW) lie on the Extracellular side of the membrane. A helical membrane pass occupies residues 238–258 (VDFILICALLLLNATIGFIEE). The Cytoplasmic portion of the chain corresponds to 259–387 (NTAGNAVEAL…GHLQVILRNI (129 aa)). Residues 388–407 (GLFCISFIAIWVLVELLVDF) form a helical membrane-spanning segment. Topologically, residues 408–425 (LGYDGYCHGVGGGRCLPL) are extracellular. A helical transmembrane segment spans residues 426–447 (NNALVLLVGGIPIAMPTVLSVT). Over 448 to 783 (MAIGATQLSK…SSRKIFQRMR (336 aa)) the chain is Cytoplasmic. Asp-480 serves as the catalytic 4-aspartylphosphate intermediate. Mg(2+)-binding residues include Asp-728 and Asp-732. The helical transmembrane segment at 784–805 (NYVIYSVAATVRICTTFGILTV) threads the bilayer. The Extracellular portion of the chain corresponds to 806–810 (AWNFK). A helical membrane pass occupies residues 811–833 (FPTIATVIIAILNDGTMLTISKD). Residues 834–849 (RVRARNEPDQWNLFEV) are Cytoplasmic-facing. Residues 850–870 (FTMALCYGFYLVGSTIVFFAI) traverse the membrane as a helical segment. At 871-889 (IHDGTWFHDAINLRILTDN) the chain is on the extracellular side. A helical membrane pass occupies residues 890–910 (ELRGLIYLQVSISGLATIFVS). Residues 911 to 922 (RSQGFSYFERPG) lie on the Cytoplasmic side of the membrane. The chain crosses the membrane as a helical span at residues 923–943 (NLVIFAFVMSQIVATFIGVYG). At 944 to 967 (FRGYPHDSFSDNPDYPVHGTNFQG) the chain is on the extracellular side. A helical transmembrane segment spans residues 968–988 (CGWGWAVCAWIWCFLWYIPMD). At 989–1058 (FIKLGVTYIL…HKSVVTDNKV (70 aa)) the chain is on the cytoplasmic side.

This sequence belongs to the cation transport ATPase (P-type) (TC 3.A.3) family. Type IIIA subfamily.

Its subcellular location is the cell membrane. It carries out the reaction ATP + H2O + H(+)(in) = ADP + phosphate + 2 H(+)(out). Acid pH levels increase its ATPase activity. In terms of biological role, P-type plasma membrane H+-ATPase (proton pump). The proton gradient it generates drives the active transport of nutrients by H(+) symport. The resulting external acidification and/or internal alkinization may mediate growth responses. The chain is Probable plasma membrane ATPase (patB) from Dictyostelium discoideum (Social amoeba).